A 721-amino-acid chain; its full sequence is MYFLKKIVNLFSSKIESEDNNVKKDDLTQPRKQSPEARKRRNRRIIFWLIILLIIGTIIGVIIYFSVRKEYDNVIVKSAQTEVVNNKKVLYLNTIRPNSTQITRYTIDEDQLLTARVNILNNTNFQIISNASSLGLSRISFNIVREGVEKFKLGETNIYAPISGNTNNQWNWLTSIITQNAGIPSSGFNPQVIISPLISIIFFIIFLYIILRVSKAQSDSLLGTNKANAKLTKSGVRFSDVAGIAEVKEELIEIVDFLKEPKKYVAAGARIPKGVMLYGPPGTGKTLIAKAVAGEANVPFFQTTGSSFEDTFVGVGARRVRELFEKARKSAPAIIFIDEIDSVAKKRGNSLTAVQDQTINQLLSELDGFDTSSGVIVMAATNRLDTLDDAILRPGRFDRQISVNLPDILEREQILRIHSRNKNLSAKVSLEDIARRTAGFSGAQLENVLNEAALLSVRDKATSIHMNHLDEAIDRVIAGPSRPNKVISEREREQVSYHEAGHALIGLYSPGADVVQKITIVARGRAAGYTLQTPERNENILQNKTELISRVRTALGGRAAEELIYGPNEITTGAANDFYKITNIVRAMVASFGMTDVGLTQYIATEGVDNPYRNSYSEQTALAIDIEIEKIIQREYKIVKEMINEHREELELIVQTLLELETILKPQIDYIHQYKQLPPEVIANKNKREASQKQANSSVEEAKVVDDEESIKDKEKDQKSN.

At 1–44 (MYFLKKIVNLFSSKIESEDNNVKKDDLTQPRKQSPEARKRRNRR) the chain is on the cytoplasmic side. The helical transmembrane segment at 45-65 (IIFWLIILLIIGTIIGVIIYF) threads the bilayer. Residues 66–190 (SVRKEYDNVI…AGIPSSGFNP (125 aa)) lie on the Extracellular side of the membrane. Residues 191-211 (QVIISPLISIIFFIIFLYIIL) form a helical membrane-spanning segment. Topologically, residues 212–721 (RVSKAQSDSL…KDKEKDQKSN (510 aa)) are cytoplasmic. 279–286 (GPPGTGKT) is a binding site for ATP. H498 provides a ligand contact to Zn(2+). The active site involves E499. Positions 502 and 577 each coordinate Zn(2+). Positions 686–721 (NKREASQKQANSSVEEAKVVDDEESIKDKEKDQKSN) are disordered. Over residues 700–721 (EEAKVVDDEESIKDKEKDQKSN) the composition is skewed to basic and acidic residues.

This sequence in the central section; belongs to the AAA ATPase family. In the C-terminal section; belongs to the peptidase M41 family. As to quaternary structure, homohexamer. Zn(2+) is required as a cofactor.

Its subcellular location is the cell membrane. In terms of biological role, acts as a processive, ATP-dependent zinc metallopeptidase for both cytoplasmic and membrane proteins. Plays a role in the quality control of integral membrane proteins. This is ATP-dependent zinc metalloprotease FtsH from Ureaplasma parvum serovar 3 (strain ATCC 27815 / 27 / NCTC 11736).